We begin with the raw amino-acid sequence, 452 residues long: Septin-10 (452 aa).

A Septin-type G domain is found at 36–302; that stretch reads QGFCFNILCV…ELYRRCKLQE (267 aa). A G1 motif region spans residues 46 to 53; sequence GETGIGKS. GTP is bound by residues 46–53, glycine 101, 182–190, glycine 236, and arginine 251; these read GETGIGKS and KADTISKSE. A G3 motif region spans residues 98 to 101; that stretch reads NTVG. The tract at residues 181-184 is G4 motif; it reads AKAD. Residue serine 414 is modified to Phosphoserine.

The protein belongs to the TRAFAC class TrmE-Era-EngA-EngB-Septin-like GTPase superfamily. Septin GTPase family. In terms of assembly, septins polymerize into heterooligomeric protein complexes that form filaments, and can associate with cellular membranes, actin filaments and microtubules. GTPase activity is required for filament formation. Interacts with ADGB. Post-translationally, proteolytically cleaved in vitro in a calmodulin-dependent manner.

Its subcellular location is the cytoplasm. The protein resides in the cytoskeleton. The protein localises to the cell projection. It localises to the cilium. It is found in the flagellum. In terms of biological role, filament-forming cytoskeletal GTPase. May play a role in cytokinesis (Potential). This chain is Septin-10, found in Mus musculus (Mouse).